Here is a 60-residue protein sequence, read N- to C-terminus: Large ribosomal subunit protein bL32 (60 aa).

Positions 1-23 (MACPKKKTSNAKRDQRRAHWRKQ) are enriched in basic residues. Positions 1 to 60 (MACPKKKTSNAKRDQRRAHWRKQAAREAQKALSLGKSVLSGRSNSFVYPTKEEEEGEDEE) are disordered.

The protein belongs to the bacterial ribosomal protein bL32 family.

The polypeptide is Large ribosomal subunit protein bL32 (Microcystis aeruginosa (strain NIES-843 / IAM M-2473)).